The chain runs to 82 residues: UPF0180 protein BC_1394 (82 aa).

Belongs to the UPF0180 family.

The polypeptide is UPF0180 protein BC_1394 (Bacillus cereus (strain ATCC 14579 / DSM 31 / CCUG 7414 / JCM 2152 / NBRC 15305 / NCIMB 9373 / NCTC 2599 / NRRL B-3711)).